Here is a 264-residue protein sequence, read N- to C-terminus: Glutamate racemase (264 aa).

Residues 10-11 (DS) and 42-43 (YG) each bind substrate. The active-site Proton donor/acceptor is the Cys-73. 74 to 75 (NT) serves as a coordination point for substrate. The Proton donor/acceptor role is filled by Cys-183. 184 to 185 (TH) lines the substrate pocket.

Belongs to the aspartate/glutamate racemases family.

It carries out the reaction L-glutamate = D-glutamate. Its pathway is cell wall biogenesis; peptidoglycan biosynthesis. Its function is as follows. Provides the (R)-glutamate required for cell wall biosynthesis. This is Glutamate racemase from Streptococcus suis (strain 98HAH33).